Here is a 1382-residue protein sequence, read N- to C-terminus: MSSAGGSSGPGYVLNDFDAVPRLSYAKSIDIRDSLTDLIRIQRDSYDAFIGIDRDGSSGIQSIFEAMFPIRDLLGRAVLEFVGYNIGEPQYDEYECIKRGITFSVPIRITLRFVVWKVQEVSFKEVKYVVDEDTSERSVKYMKEQEVSIGDLPMMTSYGTFIINGIERVIVSQMHRSPGVFFDSDKGKTYSSGKLIYSARVIPYRGSWLDFEFDIKDIIYFRIDKKRKLPVSYLLKALGMSNNDILDAFYDKVIYTRCDKGWRVPFIVDRFKGVRLSYDLMDVDGSVLVKANTRITLRIAKKLYADGLREYMVPFSGITGMFVAADLVDPSSGAVIVSAGETITSEHIVKLELFDISEIAFLNIDFLTVGPYVLNTLFLDKNMTQEDALFEIYRVLRSGESPNLDAVKSFFKGLFFESERYDLSVVGRIKLNSHLGLDVDENTTVLTKEDIVQVVKKLVLLRDGEGVVDDIDHLGNRRVRSVGEFIENQFRIGILRLERMIMDYMSSVNFDNAMPCDFVNPKVLATVLKDFFSSSQLSQFMDQTNPLSEVTHKRRLSALGPGGLTRERAGFEVRDVHPTHYGRICPIETPEGQNIGLISSLAIYAKINKYGFIESPYRKVENRVVTDKVEYLLAMQEGDYYIADAGAAIDENNRFVDDMLYCRHGGNFVMVKSEDVDYVDVSPKQIVSVAASLIPFLENNDANRALMGSNMQRQAVPLLKSEAPLVGTGMEFVVAAGSGAVVLAKRDGIVHRVDGSYIVIRAFDANKDECLGVDIYRLRKFQRSNHNTCINQRPVVKLGDYVKANDVIADGSAIDRGELALGKNVLVAFMSWQGYNFEDSIVISSDVVKRDVFTSIHIEEFECVVRDTPLGPEKIMRSVPDVNEESLSHLDDVGIVNIGAEVSASSILVGKVTPRPPVSLPPETKLLVTIFGEKVFDCVDSSLYLPPDVEGTVIDVHVFVRRGVEENDRSLLIKQSEISSFVKERDYEIDVVSEYFHDELRKLLRNAGVKVKGYSDLDSFFAEASDDTLWSTGLADAKVAAKVKDMRERFDSIVGEAHRKFEQKVDKLNYGYDLPQGVLTIVKVFVAVKHNLQPGDKMAGRHGNKGVISRIVPAEDMPHLEDGTPVDIILNSLGVPSRMNIGQILETHLGWAAVNLGKKIGRILDKGGPSMIADLRDFLDKIYDGQKLKSDIASMSSEALLVFANRLRKGVPMAAPVFEGPKDAQISKLLELAEVDPSGQVYLYDGRLGKKFDRKITVGYIYMLKLHHLVDDKIHARSVGPYGLVTQQPLGGKSHFGGQRFGEMECWALQAYGAAYTLQEMLTVKSDDIVGRVKIYESIIKGDSNFECGIPESFNVMVKELRSLCLNVVLKQDKEFTSGEVE.

Belongs to the RNA polymerase beta chain family. The RNAP catalytic core consists of 2 alpha, 1 beta, 1 beta' and 1 omega subunit. When a sigma factor is associated with the core the holoenzyme is formed, which can initiate transcription.

The catalysed reaction is RNA(n) + a ribonucleoside 5'-triphosphate = RNA(n+1) + diphosphate. DNA-dependent RNA polymerase catalyzes the transcription of DNA into RNA using the four ribonucleoside triphosphates as substrates. The sequence is that of DNA-directed RNA polymerase subunit beta from Anaplasma marginale (strain Florida).